Reading from the N-terminus, the 629-residue chain is tRNA uridine 5-carboxymethylaminomethyl modification enzyme MnmG (629 aa).

Residues 13–18 (GGGHAG), Val125, and Ser180 contribute to the FAD site. 273-287 (GPRYCPSIEDKVMRF) contacts NAD(+). Gln370 lines the FAD pocket.

The protein belongs to the MnmG family. Homodimer. Heterotetramer of two MnmE and two MnmG subunits. The cofactor is FAD.

The protein localises to the cytoplasm. Its function is as follows. NAD-binding protein involved in the addition of a carboxymethylaminomethyl (cmnm) group at the wobble position (U34) of certain tRNAs, forming tRNA-cmnm(5)s(2)U34. This chain is tRNA uridine 5-carboxymethylaminomethyl modification enzyme MnmG, found in Escherichia coli (strain SMS-3-5 / SECEC).